The primary structure comprises 790 residues: Potassium transporter 22 (790 aa).

Residues 1 to 64 are Cytoplasmic-facing; it reads MAQQQGQGAG…HGEGWARTLR (64 aa). A helical membrane pass occupies residues 65-85; that stretch reads LAFQCFGVLYGDIGTSPLYVY. The Extracellular segment spans residues 86 to 98; that stretch reads STTFDGGIRHTDD. A helical membrane pass occupies residues 99–119; it reads LLGVLSLIIYSFLLFTIIKYV. Over 120–198 the chain is Cytoplasmic; the sequence is YIALRANDDG…DLLENSRPVR (79 aa). Residues 199–219 traverse the membrane as a helical segment; it reads ISLFLLTILATAMVISDACLT. Topologically, residues 220-236 are extracellular; it reads PAISVLSAVGGLKDKAP. Residues 237 to 257 traverse the membrane as a helical segment; it reads HLNTEQVVWVTVGILVMLFAV. At 258–264 the chain is on the cytoplasmic side; sequence QRFGTDK. The chain crosses the membrane as a helical span at residues 265–285; sequence VGYLFAPVVLLWLLLIGGVGV. The Extracellular segment spans residues 286 to 318; sequence YNLAAHDVGVLRAFNPKYILDYFRRNGRHGWVS. The chain crosses the membrane as a helical span at residues 319-339; that stretch reads LGGVLLCFTGTEALFADLGCF. At 340–345 the chain is on the cytoplasmic side; sequence SIRSIQ. A helical transmembrane segment spans residues 346-366; that stretch reads LSFAFGLVPAVLLAYAGQAAY. Residues 367–385 lie on the Extracellular side of the membrane; that stretch reads LRVYPDHVGDAFYASTPQV. The chain crosses the membrane as a helical span at residues 386–406; the sequence is LFWPTLVLALAASVVGSQAMI. Topologically, residues 407-437 are cytoplasmic; the sequence is SCAFATISHSQAMGCFPRVKVVHTSRQYQGQ. A helical membrane pass occupies residues 438 to 458; the sequence is VYIPEINLLLGAAACVVTVAA. Topologically, residues 459 to 469 are extracellular; sequence RDTVVIGEAHG. Residues 470-490 form a helical membrane-spanning segment; the sequence is ICVVLVMLITTLLLTVVMVLV. The Cytoplasmic portion of the chain corresponds to 491–492; it reads WR. Residues 493–513 traverse the membrane as a helical segment; sequence VNIGWVLVFACVFASTESVYL. Residues 514-519 are Extracellular-facing; it reads TSVLYK. A helical transmembrane segment spans residues 520–540; sequence FAHGGYIPVAMSAVLMGVMGV. Residues 541-790 are Cytoplasmic-facing; sequence WHYVHVRRYK…LLKVGMSYEI (250 aa).

The protein belongs to the HAK/KUP transporter (TC 2.A.72.3) family.

The protein resides in the membrane. High-affinity potassium transporter. In Oryza sativa subsp. japonica (Rice), this protein is Potassium transporter 22 (HAK22).